A 191-amino-acid polypeptide reads, in one-letter code: dCTP deaminase, dUMP-forming (191 aa).

DCTP contacts are provided by residues 101 to 106 (KSSLGR), Asp119, 127 to 129 (TLE), Gln148, Tyr162, and Gln174. Glu129 serves as the catalytic Proton donor/acceptor. The interval 169 to 191 (NRYQGQRGPTASRSHLNFHRTRI) is disordered. The segment covering 171-183 (YQGQRGPTASRSH) has biased composition (polar residues).

The protein belongs to the dCTP deaminase family. As to quaternary structure, homotrimer.

The enzyme catalyses dCTP + 2 H2O = dUMP + NH4(+) + diphosphate. Its pathway is pyrimidine metabolism; dUMP biosynthesis; dUMP from dCTP: step 1/1. Its function is as follows. Bifunctional enzyme that catalyzes both the deamination of dCTP to dUTP and the hydrolysis of dUTP to dUMP without releasing the toxic dUTP intermediate. The chain is dCTP deaminase, dUMP-forming from Pseudarthrobacter chlorophenolicus (strain ATCC 700700 / DSM 12829 / CIP 107037 / JCM 12360 / KCTC 9906 / NCIMB 13794 / A6) (Arthrobacter chlorophenolicus).